A 510-amino-acid polypeptide reads, in one-letter code: Flagellin A (510 aa).

This sequence belongs to the bacterial flagellin family. Heteromer of FlaA and FlaB. FlaB is located proximal to the hook while the remainder of the filament is composed of the predominant FlaA.

Its subcellular location is the secreted. The protein localises to the bacterial flagellum. Flagellin is the subunit protein which polymerizes to form the filaments of bacterial flagella. Important for motility and virulence. The chain is Flagellin A (flaA) from Helicobacter pylori (strain ATCC 700392 / 26695) (Campylobacter pylori).